A 140-amino-acid polypeptide reads, in one-letter code: FLYWCH family member 2 (140 aa).

2 disordered regions span residues 1-39 (MPLPEPSEQEGESVKAGQEPSSKPGTEVVPAAPRKPREF) and 83-140 (THPE…GKSL). Position 21 is a phosphoserine (S21). Basic and acidic residues predominate over residues 98–114 (PEQKRSRQDPGADRTED). Residues 118–127 (AAGPPEAAGE) show a composition bias toward low complexity.

The sequence is that of FLYWCH family member 2 (FLYWCH2) from Pongo abelii (Sumatran orangutan).